Reading from the N-terminus, the 737-residue chain is FYVE, RhoGEF and PH domain-containing protein 3 (737 aa).

Positions 1–151 (MESGGGSSTP…KADKDAGLAQ (151 aa)) are disordered. Over residues 126 to 136 (ADSDVGEEPDS) the composition is skewed to acidic residues. Ser-128 bears the Phosphoserine mark. The DH domain occupies 157–341 (KLLHIAQELL…STAANHSNAA (185 aa)). Positions 370–469 (ELIKEGQIQK…WIQIIQATIE (100 aa)) constitute a PH 1 domain. A disordered region spans residues 487–533 (QDEDPSLSPDMPITSTSPVEPVVTTEGGSGAAGLEPRKLSSKTRRDK). Residues 500–512 (TSTSPVEPVVTTE) are compositionally biased toward low complexity. Basic and acidic residues predominate over residues 521-533 (EPRKLSSKTRRDK). The FYVE-type zinc-finger motif lies at 532–588 (DKEKQSCKSCGETFNSITKRRHHCKLCGVVICGKCSEFKAENSRQSRVCRECFLTQP). Zn(2+)-binding residues include Cys-538, Cys-541, Cys-555, Cys-558, Cys-563, Cys-566, Cys-580, and Cys-583. Disordered regions lie at residues 589-620 (VAPE…SLLC) and 713-737 (AARG…AAAP). Positions 616–715 (PSLLCGPLRL…WLETLSTAAR (100 aa)) constitute a PH 2 domain.

Its subcellular location is the cytoplasm. The protein localises to the cytoskeleton. Promotes the formation of filopodia. May activate CDC42, a member of the Ras-like family of Rho- and Rac proteins, by exchanging bound GDP for free GTP. Plays a role in regulating the actin cytoskeleton and cell shape. The protein is FYVE, RhoGEF and PH domain-containing protein 3 (FGD3) of Pongo abelii (Sumatran orangutan).